The following is a 123-amino-acid chain: Transmembrane protein 254 (123 aa).

Ala-2 carries the post-translational modification N-acetylalanine. Helical transmembrane passes span 15-35 (LFWFTVITLSFGYYTWVVFWP), 61-81 (LCNGYWLAWLIHVGESLYAIV), and 95-115 (LLWFLQTFFFGIASLTILIAY).

Its subcellular location is the membrane. The polypeptide is Transmembrane protein 254 (TMEM254) (Homo sapiens (Human)).